The following is a 143-amino-acid chain: Large-conductance mechanosensitive channel (143 aa).

3 consecutive transmembrane segments (helical) span residues 21 to 41 (VGVI…ADII), 44 to 64 (VVGL…LGTV), and 86 to 106 (GNFI…FMMV).

It belongs to the MscL family. As to quaternary structure, homopentamer.

Its subcellular location is the cell inner membrane. Channel that opens in response to stretch forces in the membrane lipid bilayer. May participate in the regulation of osmotic pressure changes within the cell. This chain is Large-conductance mechanosensitive channel, found in Variovorax paradoxus (strain S110).